Reading from the N-terminus, the 210-residue chain is 7-methyl-GTP pyrophosphatase (210 aa).

The active-site Proton acceptor is Asp-79.

This sequence belongs to the Maf family. YceF subfamily. A divalent metal cation serves as cofactor.

The protein localises to the cytoplasm. It carries out the reaction N(7)-methyl-GTP + H2O = N(7)-methyl-GMP + diphosphate + H(+). Nucleoside triphosphate pyrophosphatase that hydrolyzes 7-methyl-GTP (m(7)GTP). May have a dual role in cell division arrest and in preventing the incorporation of modified nucleotides into cellular nucleic acids. This chain is 7-methyl-GTP pyrophosphatase, found in Burkholderia orbicola (strain AU 1054).